The following is a 378-amino-acid chain: GTP 3',8-cyclase 3 (378 aa).

A Radical SAM core domain is found at 40–259; it reads RCGRTMGDLR…STLGKKYGPI (220 aa). R49 is a binding site for GTP. Residues C56 and C60 each contribute to the [4Fe-4S] cluster site. Y62 is a binding site for S-adenosyl-L-methionine. [4Fe-4S] cluster is bound at residue C63. Position 99 (R99) interacts with GTP. G103 serves as a coordination point for S-adenosyl-L-methionine. T134 is a GTP binding site. An S-adenosyl-L-methionine-binding site is contributed by S158. K195 contributes to the GTP binding site. M229 contacts S-adenosyl-L-methionine. C292 and C295 together coordinate [4Fe-4S] cluster. 297–299 lines the GTP pocket; it reads RSR. Position 309 (C309) interacts with [4Fe-4S] cluster.

It belongs to the radical SAM superfamily. MoaA family. As to quaternary structure, monomer and homodimer. It depends on [4Fe-4S] cluster as a cofactor.

It carries out the reaction GTP + AH2 + S-adenosyl-L-methionine = (8S)-3',8-cyclo-7,8-dihydroguanosine 5'-triphosphate + 5'-deoxyadenosine + L-methionine + A + H(+). Its pathway is cofactor biosynthesis; molybdopterin biosynthesis. Its function is as follows. Catalyzes the cyclization of GTP to (8S)-3',8-cyclo-7,8-dihydroguanosine 5'-triphosphate. The sequence is that of GTP 3',8-cyclase 3 from Mycobacterium bovis (strain ATCC BAA-935 / AF2122/97).